Consider the following 369-residue polypeptide: UDP-N-acetylglucosamine--N-acetylmuramyl-(pentapeptide) pyrophosphoryl-undecaprenol N-acetylglucosamine transferase (369 aa).

UDP-N-acetyl-alpha-D-glucosamine is bound by residues threonine 15 to glycine 17, asparagine 126, arginine 169, serine 197, and glutamine 299.

It belongs to the glycosyltransferase 28 family. MurG subfamily.

The protein localises to the cell inner membrane. It carries out the reaction di-trans,octa-cis-undecaprenyl diphospho-N-acetyl-alpha-D-muramoyl-L-alanyl-D-glutamyl-meso-2,6-diaminopimeloyl-D-alanyl-D-alanine + UDP-N-acetyl-alpha-D-glucosamine = di-trans,octa-cis-undecaprenyl diphospho-[N-acetyl-alpha-D-glucosaminyl-(1-&gt;4)]-N-acetyl-alpha-D-muramoyl-L-alanyl-D-glutamyl-meso-2,6-diaminopimeloyl-D-alanyl-D-alanine + UDP + H(+). The protein operates within cell wall biogenesis; peptidoglycan biosynthesis. Its function is as follows. Cell wall formation. Catalyzes the transfer of a GlcNAc subunit on undecaprenyl-pyrophosphoryl-MurNAc-pentapeptide (lipid intermediate I) to form undecaprenyl-pyrophosphoryl-MurNAc-(pentapeptide)GlcNAc (lipid intermediate II). The polypeptide is UDP-N-acetylglucosamine--N-acetylmuramyl-(pentapeptide) pyrophosphoryl-undecaprenol N-acetylglucosamine transferase (Methylorubrum extorquens (strain PA1) (Methylobacterium extorquens)).